Consider the following 498-residue polypeptide: Myotilin (498 aa).

Disordered stretches follow at residues 1–46, 64–151, and 202–241; these read MFNY…QPRQ, MSSS…HEIQ, and QDDS…NDQD. Arg20 carries the omega-N-methylarginine modification. Low complexity predominate over residues 29–43; the sequence is SSFSSQTKQSSIIIQ. Over residues 77 to 138 the composition is skewed to polar residues; the sequence is AGSNPGQRVT…INAKPSQTAN (62 aa). Positions 79–150 are necessary for interaction with ACTN1; sequence SNPGQRVTTT…PIPRTPDHEI (72 aa). Low complexity predominate over residues 202-212; sequence QDDSGAQDSQQ. Residues 215-493 are necessary for interaction with FLNC; it reads SEHARLQVPT…QRLAAQSGLY (279 aa). The necessary for interaction with ACTA1 stretch occupies residues 215-498; that stretch reads SEHARLQVPT…QSGLYESEEL (284 aa). Over residues 222–235 the composition is skewed to polar residues; the sequence is VPTSQVRSRSTSRG. 2 consecutive Ig-like C2-type domains span residues 250 to 335 and 349 to 441; these read PRFI…ATFT and PMFI…LDVT.

Belongs to the myotilin/palladin family. As to quaternary structure, homodimer. Interacts with ACTA1, ACTN1, FLNA, FLNB, FLNC and MYOZ2. Interacts with the C-terminal region of MYOZ1. As to expression, expressed in skeletal muscle (at protein level). Expressed in skeletal muscle, heart, bone marrow and thyroid gland.

It localises to the cell membrane. The protein localises to the sarcolemma. Its subcellular location is the cytoplasm. It is found in the cytoskeleton. The protein resides in the myofibril. It localises to the sarcomere. The protein localises to the z line. Component of a complex of multiple actin cross-linking proteins. Involved in the control of myofibril assembly and stability at the Z lines in muscle cells. In Homo sapiens (Human), this protein is Myotilin (MYOT).